Reading from the N-terminus, the 335-residue chain is E3 ubiquitin ligase rnf-121 (335 aa).

The Cytoplasmic portion of the chain corresponds to 1–47 (MGQHGAIRLQNEVQEGMPPPHELTEEEQWAEEHRKMHEKHKGHEAMH). A helical membrane pass occupies residues 48-68 (MEMMVIFMISVIVGQIFLVTW). Residues 69–72 (KRKH) are Lumenal-facing. Residues 73–93 (FKSYQMCTLIGMLTIPVYVCF) form a helical membrane-spanning segment. The Cytoplasmic portion of the chain corresponds to 94–99 (NRSWYR). The chain crosses the membrane as a helical span at residues 100–120 (FLATWLVFCIFSAFIWLKASA). At 121–143 (QHISGGTPRFVYKWFLFLHKLSY) the chain is on the lumenal side. Residues 144–164 (VLGVVGYLIMMGALLGFHVLF) form a helical membrane-spanning segment. Residues 165–168 (GVSQ) are Cytoplasmic-facing. The helical transmembrane segment at 169-189 (PTLMDAGILFMFYGVYYGVLG) threads the bilayer. The Lumenal portion of the chain corresponds to 190–335 (RDFAHICTAR…QGLTTWMGLE (146 aa)). The segment at 222–284 (CAVCGGRLDD…GKLQTCPYCK (63 aa)) adopts an RING-type; atypical zinc-finger fold.

This sequence belongs to the RNF121 family. Expressed in body wall muscles, the hypodermis, seam cells, vulval cells, spermathecal cells, uterine cells and the distal tip cell (at protein level).

The protein localises to the endoplasmic reticulum membrane. It localises to the golgi apparatus membrane. The enzyme catalyses S-ubiquitinyl-[E2 ubiquitin-conjugating enzyme]-L-cysteine + [acceptor protein]-L-lysine = [E2 ubiquitin-conjugating enzyme]-L-cysteine + N(6)-ubiquitinyl-[acceptor protein]-L-lysine.. The protein operates within protein modification; protein ubiquitination. In terms of biological role, E3 ubiquitin ligase which accepts ubiquitin and transfers it to substrates such as the beta-integrin subunit pat-3, promoting their degradation by the endoplasmic reticulum-associated degradation (ERAD) pathway which is a pathway involved in ubiquitin-dependent degradation of misfolded endoplasmic reticulum proteins. Negatively regulates the unfolded protein response to reduce endoplasmic reticulum stress. Required for the cessation of distal tip cell migration at the end of larval morphogenesis. Plays a role in germline and gonad development. The polypeptide is E3 ubiquitin ligase rnf-121 (Caenorhabditis elegans).